Consider the following 603-residue polypeptide: Elongation factor 4 (603 aa).

Residues 2–184 (NHIRNFSIIA…AVIARVPPPK (183 aa)) form the tr-type G domain. GTP-binding positions include 14–19 (DHGKST) and 131–134 (NKMD).

It belongs to the TRAFAC class translation factor GTPase superfamily. Classic translation factor GTPase family. LepA subfamily.

It localises to the cell inner membrane. The catalysed reaction is GTP + H2O = GDP + phosphate + H(+). Required for accurate and efficient protein synthesis under certain stress conditions. May act as a fidelity factor of the translation reaction, by catalyzing a one-codon backward translocation of tRNAs on improperly translocated ribosomes. Back-translocation proceeds from a post-translocation (POST) complex to a pre-translocation (PRE) complex, thus giving elongation factor G a second chance to translocate the tRNAs correctly. Binds to ribosomes in a GTP-dependent manner. The sequence is that of Elongation factor 4 from Polaromonas sp. (strain JS666 / ATCC BAA-500).